Here is a 226-residue protein sequence, read N- to C-terminus: Enolase-phosphatase E1 (226 aa).

This sequence belongs to the HAD-like hydrolase superfamily. MasA/MtnC family. As to quaternary structure, monomer. Requires Mg(2+) as cofactor.

It carries out the reaction 5-methylsulfanyl-2,3-dioxopentyl phosphate + H2O = 1,2-dihydroxy-5-(methylsulfanyl)pent-1-en-3-one + phosphate. It functions in the pathway amino-acid biosynthesis; L-methionine biosynthesis via salvage pathway; L-methionine from S-methyl-5-thio-alpha-D-ribose 1-phosphate: step 3/6. It participates in amino-acid biosynthesis; L-methionine biosynthesis via salvage pathway; L-methionine from S-methyl-5-thio-alpha-D-ribose 1-phosphate: step 4/6. In terms of biological role, bifunctional enzyme that catalyzes the enolization of 2,3-diketo-5-methylthiopentyl-1-phosphate (DK-MTP-1-P) into the intermediate 2-hydroxy-3-keto-5-methylthiopentenyl-1-phosphate (HK-MTPenyl-1-P), which is then dephosphorylated to form the acireductone 1,2-dihydroxy-3-keto-5-methylthiopentene (DHK-MTPene). The sequence is that of Enolase-phosphatase E1 from Shewanella sp. (strain ANA-3).